Here is a 326-residue protein sequence, read N- to C-terminus: tRNA uridine(34) hydroxylase (326 aa).

The region spanning 123 to 217 (SDPDVLLVDT…YLEEVKQEES (95 aa)) is the Rhodanese domain. Cys177 serves as the catalytic Cysteine persulfide intermediate. The disordered stretch occupies residues 304-326 (VSQVILSRRTEKEDQRQAQNKKA).

This sequence belongs to the TrhO family.

It catalyses the reaction uridine(34) in tRNA + AH2 + O2 = 5-hydroxyuridine(34) in tRNA + A + H2O. Its function is as follows. Catalyzes oxygen-dependent 5-hydroxyuridine (ho5U) modification at position 34 in tRNAs. This Shewanella sediminis (strain HAW-EB3) protein is tRNA uridine(34) hydroxylase.